A 666-amino-acid polypeptide reads, in one-letter code: UvrABC system protein B (666 aa).

The Helicase ATP-binding domain occupies 28–171 (NNINQGIQRQ…YLHVGELIEF (144 aa)). Position 41 to 48 (41 to 48 (GATGTGKT)) interacts with ATP. Residues 94–117 (YFDYYQPEAYKPITDTYIEKDSVT) carry the Beta-hairpin motif. In terms of domain architecture, Helicase C-terminal spans 436–598 (QIDDLINELM…IIPKTIIKPI (163 aa)). A UVR domain is found at 624-659 (NQKIKELKKKMEEAAKKREYEVAAQYRDMIVELEAI).

The protein belongs to the UvrB family. In terms of assembly, forms a heterotetramer with UvrA during the search for lesions. Interacts with UvrC in an incision complex.

The protein resides in the cytoplasm. In terms of biological role, the UvrABC repair system catalyzes the recognition and processing of DNA lesions. A damage recognition complex composed of 2 UvrA and 2 UvrB subunits scans DNA for abnormalities. Upon binding of the UvrA(2)B(2) complex to a putative damaged site, the DNA wraps around one UvrB monomer. DNA wrap is dependent on ATP binding by UvrB and probably causes local melting of the DNA helix, facilitating insertion of UvrB beta-hairpin between the DNA strands. Then UvrB probes one DNA strand for the presence of a lesion. If a lesion is found the UvrA subunits dissociate and the UvrB-DNA preincision complex is formed. This complex is subsequently bound by UvrC and the second UvrB is released. If no lesion is found, the DNA wraps around the other UvrB subunit that will check the other stand for damage. The chain is UvrABC system protein B from Ureaplasma parvum serovar 3 (strain ATCC 27815 / 27 / NCTC 11736).